Here is a 283-residue protein sequence, read N- to C-terminus: Probable endonuclease 4 (283 aa).

The Zn(2+) site is built by His67, His107, Glu144, Asp178, His181, His215, Asp228, His230, and Glu260.

This sequence belongs to the AP endonuclease 2 family. Requires Zn(2+) as cofactor.

It catalyses the reaction Endonucleolytic cleavage to 5'-phosphooligonucleotide end-products.. Functionally, endonuclease IV plays a role in DNA repair. It cleaves phosphodiester bonds at apurinic or apyrimidinic (AP) sites, generating a 3'-hydroxyl group and a 5'-terminal sugar phosphate. The chain is Probable endonuclease 4 from Geobacter sp. (strain M21).